A 211-amino-acid chain; its full sequence is Arginine exporter protein ArgO (211 aa).

6 helical membrane-spanning segments follow: residues 1 to 21, 37 to 57, 68 to 88, 111 to 131, 147 to 167, and 179 to 199; these read MISY…PLGP, LMIA…GIFG, LLAL…FGAL, IIAT…DTFV, WFAL…ALLA, and AQRI…FQLA.

The protein belongs to the LysE/ArgO transporter (TC 2.A.75) family.

The protein localises to the cell inner membrane. It catalyses the reaction L-arginine(in) = L-arginine(out). Functionally, involved in the export of arginine. Important to control the intracellular level of arginine and the correct balance between arginine and lysine. This is Arginine exporter protein ArgO from Salmonella paratyphi B (strain ATCC BAA-1250 / SPB7).